Consider the following 346-residue polypeptide: Probable electron transfer flavoprotein subunit alpha, mitochondrial (346 aa).

Residue 285-313 (LYVAIGISGAIQHLAGMKESKMIIAINKD) participates in FAD binding.

The protein belongs to the ETF alpha-subunit/FixB family. In terms of assembly, heterodimer of an alpha and a beta subunit. FAD serves as cofactor.

The protein localises to the mitochondrion matrix. Its function is as follows. The electron transfer flavoprotein serves as a specific electron acceptor for several dehydrogenases, including five acyl-CoA dehydrogenases, glutaryl-CoA and sarcosine dehydrogenase. It transfers the electrons to the main mitochondrial respiratory chain via ETF-ubiquinone oxidoreductase (ETF dehydrogenase). This Cryptococcus gattii serotype B (strain WM276 / ATCC MYA-4071) (Filobasidiella gattii) protein is Probable electron transfer flavoprotein subunit alpha, mitochondrial (ETF1).